We begin with the raw amino-acid sequence, 217 residues long: Probable transaldolase (217 aa).

The active-site Schiff-base intermediate with substrate is the Lys-83.

This sequence belongs to the transaldolase family. Type 3B subfamily.

The protein resides in the cytoplasm. It catalyses the reaction D-sedoheptulose 7-phosphate + D-glyceraldehyde 3-phosphate = D-erythrose 4-phosphate + beta-D-fructose 6-phosphate. The protein operates within carbohydrate degradation; pentose phosphate pathway; D-glyceraldehyde 3-phosphate and beta-D-fructose 6-phosphate from D-ribose 5-phosphate and D-xylulose 5-phosphate (non-oxidative stage): step 2/3. Transaldolase is important for the balance of metabolites in the pentose-phosphate pathway. The sequence is that of Probable transaldolase from Anaeromyxobacter sp. (strain K).